A 359-amino-acid chain; its full sequence is Probable dual-specificity RNA methyltransferase RlmN (359 aa).

Glu-100 acts as the Proton acceptor in catalysis. The region spanning 106–340 is the Radical SAM core domain; sequence TDKRLTVCVS…VSVRASRGRD (235 aa). Cys-113 and Cys-345 are disulfide-bonded. Positions 120, 124, and 127 each coordinate [4Fe-4S] cluster. S-adenosyl-L-methionine contacts are provided by residues 167–168, Ser-197, 226–228, and Asn-302; these read GE and SLH. The S-methylcysteine intermediate role is filled by Cys-345.

This sequence belongs to the radical SAM superfamily. RlmN family. [4Fe-4S] cluster is required as a cofactor.

It is found in the cytoplasm. The enzyme catalyses adenosine(2503) in 23S rRNA + 2 reduced [2Fe-2S]-[ferredoxin] + 2 S-adenosyl-L-methionine = 2-methyladenosine(2503) in 23S rRNA + 5'-deoxyadenosine + L-methionine + 2 oxidized [2Fe-2S]-[ferredoxin] + S-adenosyl-L-homocysteine. It catalyses the reaction adenosine(37) in tRNA + 2 reduced [2Fe-2S]-[ferredoxin] + 2 S-adenosyl-L-methionine = 2-methyladenosine(37) in tRNA + 5'-deoxyadenosine + L-methionine + 2 oxidized [2Fe-2S]-[ferredoxin] + S-adenosyl-L-homocysteine. Its function is as follows. Specifically methylates position 2 of adenine 2503 in 23S rRNA and position 2 of adenine 37 in tRNAs. The sequence is that of Probable dual-specificity RNA methyltransferase RlmN from Prochlorococcus marinus (strain NATL1A).